Consider the following 456-residue polypeptide: Phosphomethylpyrimidine synthase (456 aa).

Residues Asn-80, Met-109, Tyr-139, His-175, 195–197, 236–239, and Glu-275 each bind substrate; these read SRG and DSLR. His-279 contributes to the Zn(2+) binding site. Residue Tyr-302 coordinates substrate. Residue His-343 coordinates Zn(2+). [4Fe-4S] cluster contacts are provided by Cys-423, Cys-426, and Cys-431.

The protein belongs to the ThiC family. Requires [4Fe-4S] cluster as cofactor.

It catalyses the reaction 5-amino-1-(5-phospho-beta-D-ribosyl)imidazole + S-adenosyl-L-methionine = 4-amino-2-methyl-5-(phosphooxymethyl)pyrimidine + CO + 5'-deoxyadenosine + formate + L-methionine + 3 H(+). It functions in the pathway cofactor biosynthesis; thiamine diphosphate biosynthesis. Catalyzes the synthesis of the hydroxymethylpyrimidine phosphate (HMP-P) moiety of thiamine from aminoimidazole ribotide (AIR) in a radical S-adenosyl-L-methionine (SAM)-dependent reaction. The sequence is that of Phosphomethylpyrimidine synthase from Prochlorococcus marinus (strain MIT 9301).